A 284-amino-acid polypeptide reads, in one-letter code: 2-dehydro-3-deoxyphosphooctonate aldolase (284 aa).

This sequence belongs to the KdsA family.

It localises to the cytoplasm. The catalysed reaction is D-arabinose 5-phosphate + phosphoenolpyruvate + H2O = 3-deoxy-alpha-D-manno-2-octulosonate-8-phosphate + phosphate. The protein operates within carbohydrate biosynthesis; 3-deoxy-D-manno-octulosonate biosynthesis; 3-deoxy-D-manno-octulosonate from D-ribulose 5-phosphate: step 2/3. It participates in bacterial outer membrane biogenesis; lipopolysaccharide biosynthesis. The sequence is that of 2-dehydro-3-deoxyphosphooctonate aldolase from Ralstonia pickettii (strain 12J).